A 236-amino-acid chain; its full sequence is Ascorbate-specific transmembrane electron transporter 2 (236 aa).

The Cytoplasmic portion of the chain corresponds to 1–13 (MGLGLGVRAAPFT). The helical transmembrane segment at 14-34 (YAAHALAVAAAAMVLVWAIYF) threads the bilayer. The Cytochrome b561 domain occupies 15–219 (AAHALAVAAA…FGASVVVAAI (205 aa)). Topologically, residues 35 to 50 (RGGLAIEATNKNLIFN) are extracellular. The chain crosses the membrane as a helical span at residues 51–71 (VHPVLMLIGYIIIGGEAIMVY). Histidine 52 lines the heme b pocket. 67–75 (AIMVYRVLP) provides a ligand contact to L-ascorbate. The Cytoplasmic segment spans residues 72 to 84 (RVLPTSNHETNKL). The helical transmembrane segment at 85-105 (IHLVLHGIALVLGAVGIYFAF) threads the bilayer. Residues histidine 86 and histidine 120 each coordinate heme b. Over 106 to 122 (KNHNESGIANLYSLHSW) the chain is Extracellular. 116–125 (LYSLHSWIGI) is a binding site for monodehydro-L-ascorbate radical. Residues 123-143 (IGIGTITLYGIQWIVGFVTFF) form a helical membrane-spanning segment. Topologically, residues 144–153 (FPGAAPNVKK) are cytoplasmic. The helical transmembrane segment at 154–174 (GVLPWHILFGLFVYILALANA) threads the bilayer. Histidine 159 is a binding site for heme b. The Extracellular segment spans residues 175–201 (ELGFLEKLTFLESSGLDKYGTEAFLVN). The helical transmembrane segment at 202–222 (FTALVVVLFGASVVVAAIAPV) threads the bilayer. The Cytoplasmic segment spans residues 223 to 236 (RLEEPQGYVPIPEN).

Heme b serves as cofactor.

The protein localises to the membrane. In terms of biological role, two-heme-containing cytochrome. Catalyzes ascorbate-dependent trans-membrane electron transfer by utilizing a concerted H(+)/e(-) transfer mechanism. The polypeptide is Ascorbate-specific transmembrane electron transporter 2 (Zea mays (Maize)).